Here is a 441-residue protein sequence, read N- to C-terminus: Glutamate--tRNA ligase 2 (441 aa).

Residues 8–18 (PSPTGYIHVGN) carry the 'HIGH' region motif. The 'KMSKS' region signature appears at 239-243 (ALSKR). An ATP-binding site is contributed by K242.

It belongs to the class-I aminoacyl-tRNA synthetase family. Glutamate--tRNA ligase type 1 subfamily. Monomer.

Its subcellular location is the cytoplasm. It catalyses the reaction tRNA(Glu) + L-glutamate + ATP = L-glutamyl-tRNA(Glu) + AMP + diphosphate. In terms of biological role, catalyzes the attachment of glutamate to tRNA(Glu) in a two-step reaction: glutamate is first activated by ATP to form Glu-AMP and then transferred to the acceptor end of tRNA(Glu). The polypeptide is Glutamate--tRNA ligase 2 (Ruegeria sp. (strain TM1040) (Silicibacter sp.)).